A 387-amino-acid chain; its full sequence is Queuine tRNA-ribosyltransferase (387 aa).

Catalysis depends on aspartate 93, which acts as the Proton acceptor. Substrate is bound by residues 93-97 (DSGGF), aspartate 147, glutamine 190, and glycine 217. The interval 248–254 (GVGTPDD) is RNA binding. The active-site Nucleophile is the aspartate 267. The interval 272 to 276 (TRAGR) is RNA binding; important for wobble base 34 recognition. Residues cysteine 305, cysteine 307, cysteine 310, and histidine 336 each coordinate Zn(2+).

The protein belongs to the queuine tRNA-ribosyltransferase family. Homodimer. Within each dimer, one monomer is responsible for RNA recognition and catalysis, while the other monomer binds to the replacement base PreQ1. The cofactor is Zn(2+).

It carries out the reaction 7-aminomethyl-7-carbaguanine + guanosine(34) in tRNA = 7-aminomethyl-7-carbaguanosine(34) in tRNA + guanine. Its pathway is tRNA modification; tRNA-queuosine biosynthesis. In terms of biological role, catalyzes the base-exchange of a guanine (G) residue with the queuine precursor 7-aminomethyl-7-deazaguanine (PreQ1) at position 34 (anticodon wobble position) in tRNAs with GU(N) anticodons (tRNA-Asp, -Asn, -His and -Tyr). Catalysis occurs through a double-displacement mechanism. The nucleophile active site attacks the C1' of nucleotide 34 to detach the guanine base from the RNA, forming a covalent enzyme-RNA intermediate. The proton acceptor active site deprotonates the incoming PreQ1, allowing a nucleophilic attack on the C1' of the ribose to form the product. After dissociation, two additional enzymatic reactions on the tRNA convert PreQ1 to queuine (Q), resulting in the hypermodified nucleoside queuosine (7-(((4,5-cis-dihydroxy-2-cyclopenten-1-yl)amino)methyl)-7-deazaguanosine). This Gluconacetobacter diazotrophicus (strain ATCC 49037 / DSM 5601 / CCUG 37298 / CIP 103539 / LMG 7603 / PAl5) protein is Queuine tRNA-ribosyltransferase.